A 307-amino-acid polypeptide reads, in one-letter code: Ribonuclease Z (307 aa).

Zn(2+) is bound by residues histidine 63, histidine 65, aspartate 67, histidine 68, histidine 141, aspartate 212, and histidine 270. Catalysis depends on aspartate 67, which acts as the Proton acceptor.

The protein belongs to the RNase Z family. In terms of assembly, homodimer. It depends on Zn(2+) as a cofactor.

It carries out the reaction Endonucleolytic cleavage of RNA, removing extra 3' nucleotides from tRNA precursor, generating 3' termini of tRNAs. A 3'-hydroxy group is left at the tRNA terminus and a 5'-phosphoryl group is left at the trailer molecule.. Functionally, zinc phosphodiesterase, which displays some tRNA 3'-processing endonuclease activity. Probably involved in tRNA maturation, by removing a 3'-trailer from precursor tRNA. This is Ribonuclease Z from Bacillus cereus (strain G9842).